The chain runs to 349 residues: Heat-inducible transcription repressor HrcA (349 aa).

This sequence belongs to the HrcA family.

Its function is as follows. Negative regulator of class I heat shock genes (grpE-dnaK-dnaJ and groELS operons). Prevents heat-shock induction of these operons. This is Heat-inducible transcription repressor HrcA from Xylella fastidiosa (strain M23).